Reading from the N-terminus, the 61-residue chain is Protein MATERNALLY EXPRESSED GENE 6 (61 aa).

Cys38 and Cys60 form a disulfide bridge.

It belongs to the MEG family. Ubiquitous.

The polypeptide is Protein MATERNALLY EXPRESSED GENE 6 (MEG6) (Zea mays (Maize)).